Consider the following 146-residue polypeptide: Hemoglobin subunit beta (146 aa).

Position 1 is an N-acetylvaline (valine 1). The region spanning 2–146 is the Globin domain; it reads HLTDAEKALV…VATALAHKYH (145 aa). Phosphothreonine is present on threonine 12. The residue at position 44 (serine 44) is a Phosphoserine. Position 59 is an N6-acetyllysine (lysine 59). Histidine 63 contacts heme b. Residue lysine 82 is modified to N6-acetyllysine. Histidine 92 contacts heme b. Residue cysteine 93 is modified to S-nitrosocysteine. Lysine 144 is subject to N6-acetyllysine.

This sequence belongs to the globin family. As to quaternary structure, heterotetramer of two alpha chains and two beta chains. As to expression, red blood cells.

Its function is as follows. Involved in oxygen transport from the lung to the various peripheral tissues. The protein is Hemoglobin subunit beta of Peromyscus californicus (California mouse).